A 122-amino-acid polypeptide reads, in one-letter code: Large ribosomal subunit protein uL18 (122 aa).

It belongs to the universal ribosomal protein uL18 family. In terms of assembly, part of the 50S ribosomal subunit; part of the 5S rRNA/L5/L18/L25 subcomplex. Contacts the 5S and 23S rRNAs.

In terms of biological role, this is one of the proteins that bind and probably mediate the attachment of the 5S RNA into the large ribosomal subunit, where it forms part of the central protuberance. The chain is Large ribosomal subunit protein uL18 from Citrifermentans bemidjiense (strain ATCC BAA-1014 / DSM 16622 / JCM 12645 / Bem) (Geobacter bemidjiensis).